Consider the following 196-residue polypeptide: Orotate phosphoribosyltransferase (196 aa).

117–125 contacts 5-phospho-alpha-D-ribose 1-diphosphate; it reads EDVVTTGLS. Orotate-binding residues include T121 and R149.

This sequence belongs to the purine/pyrimidine phosphoribosyltransferase family. PyrE subfamily. Homodimer. Mg(2+) serves as cofactor.

It carries out the reaction orotidine 5'-phosphate + diphosphate = orotate + 5-phospho-alpha-D-ribose 1-diphosphate. The protein operates within pyrimidine metabolism; UMP biosynthesis via de novo pathway; UMP from orotate: step 1/2. Its function is as follows. Catalyzes the transfer of a ribosyl phosphate group from 5-phosphoribose 1-diphosphate to orotate, leading to the formation of orotidine monophosphate (OMP). The chain is Orotate phosphoribosyltransferase from Rhizorhabdus wittichii (strain DSM 6014 / CCUG 31198 / JCM 15750 / NBRC 105917 / EY 4224 / RW1) (Sphingomonas wittichii).